A 290-amino-acid chain; its full sequence is 4-hydroxybenzoate octaprenyltransferase (290 aa).

Transmembrane regions (helical) follow at residues 23–43, 46–66, 99–119, 141–161, 163–183, 213–233, 234–254, and 268–288; these read IGAL…TPGV, LWIL…GCVV, LFVV…TMTI, LPQV…FAAV, ESVP…AVAY, LIIG…GELN, GLGW…VYQQ, and AFMN…MSYW.

This sequence belongs to the UbiA prenyltransferase family. Mg(2+) is required as a cofactor.

Its subcellular location is the cell inner membrane. It carries out the reaction all-trans-octaprenyl diphosphate + 4-hydroxybenzoate = 4-hydroxy-3-(all-trans-octaprenyl)benzoate + diphosphate. The protein operates within cofactor biosynthesis; ubiquinone biosynthesis. Catalyzes the prenylation of para-hydroxybenzoate (PHB) with an all-trans polyprenyl group. Mediates the second step in the final reaction sequence of ubiquinone-8 (UQ-8) biosynthesis, which is the condensation of the polyisoprenoid side chain with PHB, generating the first membrane-bound Q intermediate 3-octaprenyl-4-hydroxybenzoate. This Escherichia coli (strain UTI89 / UPEC) protein is 4-hydroxybenzoate octaprenyltransferase.